Reading from the N-terminus, the 439-residue chain is GTPase Der (439 aa).

2 consecutive EngA-type G domains span residues 2-168 and 181-357; these read ATVL…EEKG and IKVA…ASYT. Residues 8–15, 55–59, 118–121, 187–194, 234–238, and 300–303 contribute to the GTP site; these read GKPNVGKS, DTCGV, NKTE, GRPNVGKS, DTAGL, and NKWD. The KH-like domain maps to 358 to 439; the sequence is TKVPSSAINS…PIFLKFKRSR (82 aa).

It belongs to the TRAFAC class TrmE-Era-EngA-EngB-Septin-like GTPase superfamily. EngA (Der) GTPase family. As to quaternary structure, associates with the 50S ribosomal subunit.

Functionally, GTPase that plays an essential role in the late steps of ribosome biogenesis. In Thermotoga petrophila (strain ATCC BAA-488 / DSM 13995 / JCM 10881 / RKU-1), this protein is GTPase Der.